Reading from the N-terminus, the 230-residue chain is Large ribosomal subunit protein uL1 (230 aa).

Belongs to the universal ribosomal protein uL1 family. As to quaternary structure, part of the 50S ribosomal subunit.

Binds directly to 23S rRNA. The L1 stalk is quite mobile in the ribosome, and is involved in E site tRNA release. In terms of biological role, protein L1 is also a translational repressor protein, it controls the translation of the L11 operon by binding to its mRNA. This chain is Large ribosomal subunit protein uL1, found in Ligilactobacillus salivarius (strain UCC118) (Lactobacillus salivarius).